The chain runs to 214 residues: Adenylate kinase (214 aa).

Residue 10–15 (GVGKGT) participates in ATP binding. The NMP stretch occupies residues 30 to 59 (STGDILRAAVKELTPMGAKAKGYMDSGALV). AMP is bound by residues Thr31, Arg36, 57–59 (ALV), 85–88 (GFPR), and Gln92. The interval 126–163 (GRRACANCGAGYHVDFAPSKVAGVCDACSGQLVQREDD) is LID. ATP is bound at residue Arg127. The Zn(2+) site is built by Cys130, Cys133, Cys150, and Cys153. 2 residues coordinate AMP: Arg160 and Arg171. ATP is bound at residue Gly199.

Belongs to the adenylate kinase family. As to quaternary structure, monomer.

The protein localises to the cytoplasm. The enzyme catalyses AMP + ATP = 2 ADP. It functions in the pathway purine metabolism; AMP biosynthesis via salvage pathway; AMP from ADP: step 1/1. Functionally, catalyzes the reversible transfer of the terminal phosphate group between ATP and AMP. Plays an important role in cellular energy homeostasis and in adenine nucleotide metabolism. The protein is Adenylate kinase of Geobacter sp. (strain M21).